The primary structure comprises 400 residues: Na(+)/H(+) antiporter NhaA (400 aa).

Transmembrane regions (helical) follow at residues 26–46 (AGGI…NSPL), 71–91 (LIHW…GMEV), 107–127 (IFPA…YWFI), 137–157 (GWAI…ALLS), 166–186 (IFLL…IALF), 189–209 (HGLS…LILL), 225–245 (AILW…GVII), 273–293 (FVIL…GIDV), 299–319 (PLLL…IFGF), 340–360 (IFAV…LASL), and 373–393 (LSRL…YLFL).

The protein belongs to the NhaA Na(+)/H(+) (TC 2.A.33) antiporter family.

It is found in the cell inner membrane. It catalyses the reaction Na(+)(in) + 2 H(+)(out) = Na(+)(out) + 2 H(+)(in). Functionally, na(+)/H(+) antiporter that extrudes sodium in exchange for external protons. This is Na(+)/H(+) antiporter NhaA from Haemophilus influenzae (strain ATCC 51907 / DSM 11121 / KW20 / Rd).